The sequence spans 624 residues: Chaperone protein HtpG (624 aa).

The segment at 1–336 (MKGQETRGFQ…SNDLPLNVSR (336 aa)) is a; substrate-binding. Positions 337–552 (EILQDSTVTR…ADEMSTQMAK (216 aa)) are b. Residues 553 to 624 (LFAAAGQSVP…IRRMNQLLVS (72 aa)) form a c region.

The protein belongs to the heat shock protein 90 family. Homodimer.

The protein resides in the cytoplasm. Molecular chaperone. Has ATPase activity. This chain is Chaperone protein HtpG, found in Salmonella typhi.